The sequence spans 53 residues: Large ribosomal subunit protein bL32c (53 aa).

Belongs to the bacterial ribosomal protein bL32 family.

The protein localises to the plastid. It is found in the chloroplast. The polypeptide is Large ribosomal subunit protein bL32c (Coffea arabica (Arabian coffee)).